The chain runs to 442 residues: Histidine--tRNA ligase (442 aa).

The protein belongs to the class-II aminoacyl-tRNA synthetase family. As to quaternary structure, homodimer.

The protein resides in the cytoplasm. The catalysed reaction is tRNA(His) + L-histidine + ATP = L-histidyl-tRNA(His) + AMP + diphosphate + H(+). In Helicobacter pylori (strain HPAG1), this protein is Histidine--tRNA ligase.